Consider the following 139-residue polypeptide: Maximins 4/H3 type 5 (139 aa).

An N-terminal signal peptide occupies residues 1 to 18 (MNFKYIFAVSFLIASAYA). Residues 19 to 43 (RSVQNDEQSLSQRDVLEEESLREIR) constitute a propeptide that is removed on maturation. An Asparagine amide modification is found at Asn-70. Positions 74 to 118 (TAEEHEVMKRLEAVMRDLDSLDHPEEASERETRGFNQDEIAKEKR) are excised as a propeptide. Isoleucine amide is present on Ile-138.

It belongs to the bombinin family. In terms of tissue distribution, expressed by the skin glands.

The protein localises to the secreted. Its function is as follows. Maximin-4 shows antibacterial activity against both Gram-positive and Gram-negative bacteria. It also shows antimicrobial activity against the fungus C.albicans, but not against A.flavus nor P.uticale. It has little hemolytic activity. It does not possess a significant cytotoxicity against tumor cell lines. It does not possess a significant anti-HIV activity. Maximin-H3 shows antibacterial activity against both Gram-positive and Gram-negative bacteria. It also shows antimicrobial activity against the fungus C.albicans. Shows strong hemolytic activity. The protein is Maximins 4/H3 type 5 of Bombina maxima (Giant fire-bellied toad).